Reading from the N-terminus, the 372-residue chain is MDAALLLNVEGVKKTILHGGTGELPNFITGSRVIFHFRTMKCDEERTVIDDSRQVDQPMHIIIGNMFKLEVWEILLTSMRVHEVAEFWCDTIHTGVYPILSRSLRQMAQGKDPTEWHVHTCGLANMFAYHTLGYEDLDELQKEPQPLIFVIELLQVDAPSDYQRETWNLSNHEKMKVVPVLHGEGNRLFKLGRYEEASSKYQEAIICLRNLQTKEKPWEVQWLKLEKMINTLTLNYCQCLLKKEEYYEVLEHTSDILRHHPGIVKAYYVRARAHAEVWNEAEAKADLQKVLELEPSMQKAVRRELRLLENRMAEKQEEERLRCRNMLSQGATQPPTEPPAEPHTAPPAELSTGPPAEPPAELPLSPGHSLQH.

A PPIase FKBP-type domain is found at 53 to 145 (RQVDQPMHII…DLDELQKEPQ (93 aa)). 3 TPR repeats span residues 178–211 (VPVLHGEGNRLFKLGRYEEASSKYQEAIICLRNL), 230–263 (NTLTLNYCQCLLKKEEYYEVLEHTSDILRHHPGI), and 264–297 (VKAYYVRARAHAEVWNEAEAKADLQKVLELEPSM). Residues 315-372 (KQEEERLRCRNMLSQGATQPPTEPPAEPHTAPPAELSTGPPAEPPAELPLSPGHSLQH) are disordered. The segment covering 335–345 (PTEPPAEPHTA) has biased composition (pro residues).

Interacts with NUB1.

It localises to the cytoplasm. It is found in the nucleus. Functionally, may be important in protein trafficking and/or protein folding and stabilization. The polypeptide is Aryl-hydrocarbon-interacting protein-like 1 (AIPL1) (Papio cynocephalus (Yellow baboon)).